The sequence spans 337 residues: Glyceraldehyde-3-phosphate dehydrogenase (337 aa).

NAD(+) is bound by residues 13–14, aspartate 35, and arginine 80; that span reads RI. Residues 150 to 152, threonine 181, 210 to 211, and arginine 233 each bind D-glyceraldehyde 3-phosphate; these read SCT and TG. Cysteine 151 (nucleophile) is an active-site residue. Asparagine 315 contributes to the NAD(+) binding site.

It belongs to the glyceraldehyde-3-phosphate dehydrogenase family. In terms of assembly, homotetramer.

Its subcellular location is the cytoplasm. It carries out the reaction D-glyceraldehyde 3-phosphate + phosphate + NAD(+) = (2R)-3-phospho-glyceroyl phosphate + NADH + H(+). The protein operates within carbohydrate degradation; glycolysis; pyruvate from D-glyceraldehyde 3-phosphate: step 1/5. This chain is Glyceraldehyde-3-phosphate dehydrogenase (GPDA), found in Colletotrichum lindemuthianum (Bean anthracnose fungus).